A 348-amino-acid polypeptide reads, in one-letter code: Peroxidase 40 (348 aa).

A signal peptide spans 1 to 21 (MKNLFNLFLMFFFAMPILSLS). A glycan (N-linked (GlcNAc...) asparagine) is linked at Asn-26. 4 cysteine pairs are disulfide-bonded: Cys-59–Cys-139, Cys-92–Cys-97, Cys-145–Cys-344, and Cys-224–Cys-256. The active-site Proton acceptor is the His-90. Ca(2+) is bound by residues Asp-91, Val-94, Gly-96, Asp-98, and Ser-100. Positions 170-189 (GRKDSRTASKQAATNGLPSP) are disordered. A compositionally biased stretch (polar residues) spans 177–189 (ASKQAATNGLPSP). Residue Pro-187 participates in substrate binding. A glycan (N-linked (GlcNAc...) asparagine) is linked at Asn-190. His-217 lines the heme b pocket. Ca(2+) is bound at residue Thr-218. Ca(2+) contacts are provided by Asp-269, Thr-272, and Asp-277.

Belongs to the peroxidase family. Classical plant (class III) peroxidase subfamily. Requires heme b as cofactor. Ca(2+) is required as a cofactor.

It localises to the secreted. It carries out the reaction 2 a phenolic donor + H2O2 = 2 a phenolic radical donor + 2 H2O. Its function is as follows. Removal of H(2)O(2), oxidation of toxic reductants, biosynthesis and degradation of lignin, suberization, auxin catabolism, response to environmental stresses such as wounding, pathogen attack and oxidative stress. These functions might be dependent on each isozyme/isoform in each plant tissue. The polypeptide is Peroxidase 40 (PER40) (Arabidopsis thaliana (Mouse-ear cress)).